The primary structure comprises 432 residues: Monoacylglycerol lipase ABHD2 (432 aa).

The Cytoplasmic portion of the chain corresponds to 1–14 (MNTHESEVYTVAPE). A helical; Signal-anchor for type II membrane protein membrane pass occupies residues 15–35 (MPAMFDGMKLAAVATVLYVIV). Over 36 to 432 (RCLNLKSPTA…NQTTCQENTS (397 aa)) the chain is Extracellular. Positions 132 to 383 (TMVICPGIGN…HGGHLGFFEG (252 aa)) constitute an AB hydrolase-1 domain. Residue Asn141 is glycosylated (N-linked (GlcNAc...) asparagine). Catalysis depends on Ser212, which acts as the Nucleophile. N-linked (GlcNAc...) asparagine glycosylation occurs at Asn225. Residues Asp346 and His377 each act as charge relay system in the active site. The interval 413–432 (PPCQSKDAQSNQTTCQENTS) is disordered. A compositionally biased stretch (polar residues) spans 418–432 (KDAQSNQTTCQENTS). The N-linked (GlcNAc...) asparagine glycan is linked to Asn423.

The protein belongs to the AB hydrolase superfamily. AB hydrolase 4 family.

Its subcellular location is the cell membrane. The enzyme catalyses Hydrolyzes glycerol monoesters of long-chain fatty acids.. It catalyses the reaction an acetyl ester + H2O = an aliphatic alcohol + acetate + H(+). It carries out the reaction a triacylglycerol + H2O = a diacylglycerol + a fatty acid + H(+). The catalysed reaction is 2-(5Z,8Z,11Z,14Z-eicosatetraenoyl)-glycerol + H2O = glycerol + (5Z,8Z,11Z,14Z)-eicosatetraenoate + H(+). The enzyme catalyses a butanoate ester + H2O = an aliphatic alcohol + butanoate + H(+). It catalyses the reaction hexadecanoate ester + H2O = an aliphatic alcohol + hexadecanoate + H(+). Acylglycerol lipase activity is activated upon binding to progesterone. Functionally, progesterone-dependent acylglycerol lipase that catalyzes hydrolysis of endocannabinoid arachidonoylglycerol (AG) from cell membrane. Acts as a progesterone receptor: progesterone-binding activates the acylglycerol lipase activity, mediating degradation of 1-arachidonoylglycerol (1AG) and 2-arachidonoylglycerol (2AG) to glycerol and arachidonic acid (AA). Also displays an ester hydrolase activity against acetyl ester, butanoate ester and hexadecanoate ester. Plays a key role in sperm capacitation in response to progesterone by mediating degradation of 2AG, an inhibitor of the sperm calcium channel CatSper, leading to calcium influx via CatSper and sperm activation. May also play a role in smooth muscle cells migration. In Danio rerio (Zebrafish), this protein is Monoacylglycerol lipase ABHD2 (abhd2a).